The sequence spans 492 residues: Catalase isozyme 2 (492 aa).

The segment at 1–32 (MDPYKFRPSSSNDTPFWTTNAGDPVSNNNSSM) is disordered. Polar residues predominate over residues 8 to 32 (PSSSNDTPFWTTNAGDPVSNNNSSM). Active-site residues include histidine 65 and asparagine 138. A heme-binding site is contributed by tyrosine 348.

This sequence belongs to the catalase family. Homotetramer. The cofactor is heme. Abundant in hypocotyls and roots. Low levels are seen in the endosperms and cotyledons.

Its subcellular location is the peroxisome. The protein resides in the glyoxysome. It catalyses the reaction 2 H2O2 = O2 + 2 H2O. Its function is as follows. Occurs in almost all aerobically respiring organisms and serves to protect cells from the toxic effects of hydrogen peroxide. The chain is Catalase isozyme 2 (CAT2) from Ricinus communis (Castor bean).